Here is a 333-residue protein sequence, read N- to C-terminus: Serine proteinase inhibitor 2 (333 aa).

Belongs to the serpin family. Poxviruses subfamily.

The protein localises to the host cytoplasm. Functionally, weak inhibitor of the interleukin-1-beta converting enzyme (ICE) and of granzyme B. Does not form a stable complex with ICE, but can for a stable complex with granzyme B. This chain is Serine proteinase inhibitor 2 (SERP2), found in Myxoma virus (strain Uriarra) (MYXV).